Consider the following 260-residue polypeptide: Flap endonuclease Xni (260 aa).

Aspartate 112 is a Mg(2+) binding site. The 91-residue stretch at 168–258 (LQPSQLVDFW…FNLKDLRYTP (91 aa)) folds into the 5'-3' exonuclease domain. 3 residues coordinate K(+): leucine 179, valine 190, and isoleucine 193. The interval 192–197 (GIGEKT) is interaction with DNA.

It belongs to the Xni family. Mg(2+) serves as cofactor. The cofactor is K(+).

In terms of biological role, has flap endonuclease activity. During DNA replication, flap endonucleases cleave the 5'-overhanging flap structure that is generated by displacement synthesis when DNA polymerase encounters the 5'-end of a downstream Okazaki fragment. This Tolumonas auensis (strain DSM 9187 / NBRC 110442 / TA 4) protein is Flap endonuclease Xni.